A 131-amino-acid chain; its full sequence is Arsenate reductase 2 (131 aa).

Residues Cys10, Cys82, and Cys89 each act as nucleophile in the active site. Intrachain disulfides connect Cys10-Cys82 and Cys82-Cys89.

This sequence belongs to the low molecular weight phosphotyrosine protein phosphatase family. Thioredoxin-coupled ArsC subfamily.

The protein resides in the cytoplasm. It carries out the reaction arsenate + [thioredoxin]-dithiol + H(+) = arsenite + [thioredoxin]-disulfide + H2O. In terms of biological role, catalyzes the reduction of arsenate [As(V)] to arsenite [As(III)]. The chain is Arsenate reductase 2 from Staphylococcus epidermidis (strain ATCC 35984 / DSM 28319 / BCRC 17069 / CCUG 31568 / BM 3577 / RP62A).